The chain runs to 227 residues: Cytochrome c oxidase subunit 2 (227 aa).

Topologically, residues 1–14 (MAYPFQLGLQDATS) are mitochondrial intermembrane. Residues 15–45 (PIMEELTNFHDHTLMIVFLISSLVLYIISLM) traverse the membrane as a helical segment. At 46 to 59 (LTTKLTHTSTMDAQ) the chain is on the mitochondrial matrix side. The chain crosses the membrane as a helical span at residues 60–87 (EVETIWTILPAVILILIALPSLRILYMM). Residues 88-227 (DEINNPVLTV…HFENWSTSMI (140 aa)) lie on the Mitochondrial intermembrane side of the membrane. The Cu cation site is built by His161, Cys196, Glu198, Cys200, His204, and Met207. Glu198 lines the Mg(2+) pocket.

Belongs to the cytochrome c oxidase subunit 2 family. As to quaternary structure, component of the cytochrome c oxidase (complex IV, CIV), a multisubunit enzyme composed of 14 subunits. The complex is composed of a catalytic core of 3 subunits MT-CO1, MT-CO2 and MT-CO3, encoded in the mitochondrial DNA, and 11 supernumerary subunits COX4I, COX5A, COX5B, COX6A, COX6B, COX6C, COX7A, COX7B, COX7C, COX8 and NDUFA4, which are encoded in the nuclear genome. The complex exists as a monomer or a dimer and forms supercomplexes (SCs) in the inner mitochondrial membrane with NADH-ubiquinone oxidoreductase (complex I, CI) and ubiquinol-cytochrome c oxidoreductase (cytochrome b-c1 complex, complex III, CIII), resulting in different assemblies (supercomplex SCI(1)III(2)IV(1) and megacomplex MCI(2)III(2)IV(2)). Found in a complex with TMEM177, COA6, COX18, COX20, SCO1 and SCO2. Interacts with TMEM177 in a COX20-dependent manner. Interacts with COX20. Interacts with COX16. Cu cation is required as a cofactor.

It localises to the mitochondrion inner membrane. It catalyses the reaction 4 Fe(II)-[cytochrome c] + O2 + 8 H(+)(in) = 4 Fe(III)-[cytochrome c] + 2 H2O + 4 H(+)(out). Its function is as follows. Component of the cytochrome c oxidase, the last enzyme in the mitochondrial electron transport chain which drives oxidative phosphorylation. The respiratory chain contains 3 multisubunit complexes succinate dehydrogenase (complex II, CII), ubiquinol-cytochrome c oxidoreductase (cytochrome b-c1 complex, complex III, CIII) and cytochrome c oxidase (complex IV, CIV), that cooperate to transfer electrons derived from NADH and succinate to molecular oxygen, creating an electrochemical gradient over the inner membrane that drives transmembrane transport and the ATP synthase. Cytochrome c oxidase is the component of the respiratory chain that catalyzes the reduction of oxygen to water. Electrons originating from reduced cytochrome c in the intermembrane space (IMS) are transferred via the dinuclear copper A center (CU(A)) of subunit 2 and heme A of subunit 1 to the active site in subunit 1, a binuclear center (BNC) formed by heme A3 and copper B (CU(B)). The BNC reduces molecular oxygen to 2 water molecules using 4 electrons from cytochrome c in the IMS and 4 protons from the mitochondrial matrix. This is Cytochrome c oxidase subunit 2 (MT-CO2) from Praomys taitae (Taita hill rat).